The sequence spans 525 residues: Peptide chain release factor 3 (525 aa).

The region spanning 11–279 (NKRRTFAIIS…TYLQFAPAPS (269 aa)) is the tr-type G domain. GTP contacts are provided by residues 20–27 (SHPDAGKT), 88–92 (DTPGH), and 142–145 (NKFD).

It belongs to the TRAFAC class translation factor GTPase superfamily. Classic translation factor GTPase family. PrfC subfamily.

The protein localises to the cytoplasm. Increases the formation of ribosomal termination complexes and stimulates activities of RF-1 and RF-2. It binds guanine nucleotides and has strong preference for UGA stop codons. It may interact directly with the ribosome. The stimulation of RF-1 and RF-2 is significantly reduced by GTP and GDP, but not by GMP. The polypeptide is Peptide chain release factor 3 (Limosilactobacillus reuteri (strain DSM 20016) (Lactobacillus reuteri)).